The primary structure comprises 115 residues: Large ribosomal subunit protein uL22 (115 aa).

Belongs to the universal ribosomal protein uL22 family. As to quaternary structure, part of the 50S ribosomal subunit.

Functionally, this protein binds specifically to 23S rRNA; its binding is stimulated by other ribosomal proteins, e.g. L4, L17, and L20. It is important during the early stages of 50S assembly. It makes multiple contacts with different domains of the 23S rRNA in the assembled 50S subunit and ribosome. In terms of biological role, the globular domain of the protein is located near the polypeptide exit tunnel on the outside of the subunit, while an extended beta-hairpin is found that lines the wall of the exit tunnel in the center of the 70S ribosome. The polypeptide is Large ribosomal subunit protein uL22 (Streptomyces griseus subsp. griseus (strain JCM 4626 / CBS 651.72 / NBRC 13350 / KCC S-0626 / ISP 5235)).